A 67-amino-acid polypeptide reads, in one-letter code: MKKGIHPNYVPCKVTCVTSGKEFEVLSTKPELRIDISSFCHPFYTGSDKVVDTAGRVEKFKQKYNMK.

Belongs to the bacterial ribosomal protein bL31 family. Type A subfamily. In terms of assembly, part of the 50S ribosomal subunit.

Binds the 23S rRNA. The polypeptide is Large ribosomal subunit protein bL31 (Wolinella succinogenes (strain ATCC 29543 / DSM 1740 / CCUG 13145 / JCM 31913 / LMG 7466 / NCTC 11488 / FDC 602W) (Vibrio succinogenes)).